The chain runs to 1405 residues: DNA-directed RNA polymerase subunit beta' (1405 aa).

Positions 70, 72, 85, and 88 each coordinate Zn(2+). Positions 460, 462, and 464 each coordinate Mg(2+). Cys-815, Cys-890, Cys-897, and Cys-900 together coordinate Zn(2+).

The protein belongs to the RNA polymerase beta' chain family. As to quaternary structure, the RNAP catalytic core consists of 2 alpha, 1 beta, 1 beta' and 1 omega subunit. When a sigma factor is associated with the core the holoenzyme is formed, which can initiate transcription. Mg(2+) is required as a cofactor. It depends on Zn(2+) as a cofactor.

The enzyme catalyses RNA(n) + a ribonucleoside 5'-triphosphate = RNA(n+1) + diphosphate. Its function is as follows. DNA-dependent RNA polymerase catalyzes the transcription of DNA into RNA using the four ribonucleoside triphosphates as substrates. The protein is DNA-directed RNA polymerase subunit beta' of Xanthomonas campestris pv. campestris (strain B100).